The sequence spans 258 residues: Acyl-[acyl-carrier-protein]--UDP-N-acetylglucosamine O-acyltransferase (258 aa).

The protein belongs to the transferase hexapeptide repeat family. LpxA subfamily. As to quaternary structure, homotrimer.

The protein resides in the cytoplasm. It catalyses the reaction a (3R)-hydroxyacyl-[ACP] + UDP-N-acetyl-alpha-D-glucosamine = a UDP-3-O-[(3R)-3-hydroxyacyl]-N-acetyl-alpha-D-glucosamine + holo-[ACP]. It functions in the pathway glycolipid biosynthesis; lipid IV(A) biosynthesis; lipid IV(A) from (3R)-3-hydroxytetradecanoyl-[acyl-carrier-protein] and UDP-N-acetyl-alpha-D-glucosamine: step 1/6. Its function is as follows. Involved in the biosynthesis of lipid A, a phosphorylated glycolipid that anchors the lipopolysaccharide to the outer membrane of the cell. The polypeptide is Acyl-[acyl-carrier-protein]--UDP-N-acetylglucosamine O-acyltransferase (Pseudomonas fluorescens (strain ATCC BAA-477 / NRRL B-23932 / Pf-5)).